We begin with the raw amino-acid sequence, 407 residues long: Phosphoglycerate kinase (407 aa).

Substrate contacts are provided by residues 21–23, Arg-36, 59–62, Arg-116, and Arg-156; these read DLN and HQGR. ATP contacts are provided by residues Glu-332 and 358 to 361; that span reads GGDT.

This sequence belongs to the phosphoglycerate kinase family. In terms of assembly, monomer.

The protein resides in the cytoplasm. The enzyme catalyses (2R)-3-phosphoglycerate + ATP = (2R)-3-phospho-glyceroyl phosphate + ADP. It functions in the pathway carbohydrate degradation; glycolysis; pyruvate from D-glyceraldehyde 3-phosphate: step 2/5. The polypeptide is Phosphoglycerate kinase (Halorubrum lacusprofundi (strain ATCC 49239 / DSM 5036 / JCM 8891 / ACAM 34)).